We begin with the raw amino-acid sequence, 209 residues long: 2-phospho-L-lactate guanylyltransferase (209 aa).

It belongs to the CofC family. Homodimer.

It carries out the reaction (2S)-2-phospholactate + GTP + H(+) = (2S)-lactyl-2-diphospho-5'-guanosine + diphosphate. It functions in the pathway cofactor biosynthesis; coenzyme F420 biosynthesis. In terms of biological role, guanylyltransferase that catalyzes the activation of (2S)-2-phospholactate (2-PL) as (2S)-lactyl-2-diphospho-5'-guanosine, via the condensation of 2-PL with GTP. It is involved in the biosynthesis of coenzyme F420, a hydride carrier cofactor. The protein is 2-phospho-L-lactate guanylyltransferase of Methanosphaerula palustris (strain ATCC BAA-1556 / DSM 19958 / E1-9c).